Here is a 120-residue protein sequence, read N- to C-terminus: Large ribosomal subunit protein uL18 (120 aa).

This sequence belongs to the universal ribosomal protein uL18 family. Part of the 50S ribosomal subunit; part of the 5S rRNA/L5/L18/L25 subcomplex. Contacts the 5S and 23S rRNAs.

This is one of the proteins that bind and probably mediate the attachment of the 5S RNA into the large ribosomal subunit, where it forms part of the central protuberance. The protein is Large ribosomal subunit protein uL18 of Clostridium novyi (strain NT).